Here is a 274-residue protein sequence, read N- to C-terminus: Large ribosomal subunit protein uL2cz/uL2cy (274 aa).

Disordered stretches follow at residues 1–25 (MAIH…VKSN) and 223–274 (MNPV…RRTK).

Belongs to the universal ribosomal protein uL2 family. In terms of assembly, part of the 50S ribosomal subunit.

The protein resides in the plastid. It is found in the chloroplast. This is Large ribosomal subunit protein uL2cz/uL2cy (rpl2-A) from Citrus sinensis (Sweet orange).